A 174-amino-acid chain; its full sequence is MIAEVAAGGALGLALSVLHEAVKRAKDRSVTTRFILHRLEATIDSITPLVVQIDKFSEEMEDSTSRKVNKRLKLLLENAVSLVEENAELRRRNVRKKFRYMRDIKEFEAKLRWVVDVDVQVNQLADIKELKAKMSEISTKLDKIMPQPKFEIHIGWCSGKTNRAIRFTFCSDDS.

One can recognise an RPW8 domain in the interval 1–153; that stretch reads MIAEVAAGGA…IMPQPKFEIH (153 aa). A helical transmembrane segment spans residues 7–23; the sequence is AGGALGLALSVLHEAVK. The stretch at 68–145 forms a coiled coil; it reads VNKRLKLLLE…EISTKLDKIM (78 aa).

It belongs to the plant RPW8 protein family.

It localises to the membrane. Its function is as follows. Disease resistance (R) protein that induces localized, salicylic acid-dependent defenses. Confers resistance to powdery mildew (e.g. Erysiphe cichoracearum UCSC1). This chain is Protein RESISTANCE TO POWDERY MILDEW 8.2, found in Arabidopsis thaliana (Mouse-ear cress).